The sequence spans 440 residues: tRNA(Ile)-lysidine synthase (440 aa).

28–33 (SGGMDS) provides a ligand contact to ATP.

It belongs to the tRNA(Ile)-lysidine synthase family.

It is found in the cytoplasm. The enzyme catalyses cytidine(34) in tRNA(Ile2) + L-lysine + ATP = lysidine(34) in tRNA(Ile2) + AMP + diphosphate + H(+). Its function is as follows. Ligates lysine onto the cytidine present at position 34 of the AUA codon-specific tRNA(Ile) that contains the anticodon CAU, in an ATP-dependent manner. Cytidine is converted to lysidine, thus changing the amino acid specificity of the tRNA from methionine to isoleucine. This Xanthomonas axonopodis pv. citri (strain 306) protein is tRNA(Ile)-lysidine synthase.